A 448-amino-acid chain; its full sequence is Chromosomal replication initiator protein DnaA (448 aa).

Positions 1 to 73 (MSTHLTETWE…VNALKLLTSK (73 aa)) are domain I, interacts with DnaA modulators. Residues 73–109 (KKYNIDFIVTTEEKIEENEKNHNNEKSNIVVNDEMST) form a domain II region. Residues 110–326 (MLNPKYTFDS…GALIRIVAFS (217 aa)) form a domain III, AAA+ region region. 4 residues coordinate ATP: Gly-154, Gly-156, Lys-157, and Thr-158. The segment at 327–448 (SLTNKEISVD…NELNKRINQK (122 aa)) is domain IV, binds dsDNA.

The protein belongs to the DnaA family. Oligomerizes as a right-handed, spiral filament on DNA at oriC.

The protein resides in the cytoplasm. Its function is as follows. Plays an essential role in the initiation and regulation of chromosomal replication. ATP-DnaA binds to the origin of replication (oriC) to initiate formation of the DNA replication initiation complex once per cell cycle. Binds the DnaA box (a 9 base pair repeat at the origin) and separates the double-stranded (ds)DNA. Forms a right-handed helical filament on oriC DNA; dsDNA binds to the exterior of the filament while single-stranded (ss)DNA is stabiized in the filament's interior. The ATP-DnaA-oriC complex binds and stabilizes one strand of the AT-rich DNA unwinding element (DUE), permitting loading of DNA polymerase. After initiation quickly degrades to an ADP-DnaA complex that is not apt for DNA replication. Binds acidic phospholipids. The polypeptide is Chromosomal replication initiator protein DnaA (Clostridium botulinum (strain 657 / Type Ba4)).